Consider the following 275-residue polypeptide: Replication protein A 32 kDa subunit (275 aa).

The tract at residues 23–47 (MQSPGGFGSPAPTQGEKKSRSRSQQ) is disordered. Residues 76-150 (VTIVGIVRHA…KSVVAFKIAP (75 aa)) constitute a DNA-binding region (OB).

Belongs to the replication factor A protein 2 family. As to quaternary structure, component of the replication protein A complex (RPA/RP-A), a heterotrimeric complex composed of RPA1, RPA2 and RPA3. Differentially phosphorylated throughout the cell cycle, becoming phosphorylated at the G1-S transition and dephosphorylated in late mitosis. Phosphorylation increases upon replication fork stalling.

The protein resides in the nucleus. It localises to the PML body. In terms of biological role, as part of the heterotrimeric replication protein A complex (RPA/RP-A), binds and stabilizes single-stranded DNA intermediates, that form during DNA replication or upon DNA stress. It prevents their reannealing and in parallel, recruits and activates different proteins and complexes involved in DNA metabolism. Thereby, it plays an essential role both in DNA replication and the cellular response to DNA damage. This chain is Replication protein A 32 kDa subunit (rpa2), found in Xenopus tropicalis (Western clawed frog).